The following is a 480-amino-acid chain: uncharacterized protein (480 aa).

Residues 7–28 traverse the membrane as a helical segment; that stretch reads HVISIFETFGAYFINIFYNFLY. Residues N73 and N195 are each glycosylated (N-linked (GlcNAc...) asparagine; by host). Residues 195–235 adopt a coiled-coil conformation; sequence NRSLLYQIEELTSEKKSLLAELSTLRKKYEKRQSEYRRLVQ. The disordered stretch occupies residues 297-332; the sequence is ELTSKSPSNYPVPQSRTIVSKPSDNYPVPQSRSSKI. Polar residues predominate over residues 301–329; that stretch reads KSPSNYPVPQSRTIVSKPSDNYPVPQSRS. An N-linked (GlcNAc...) asparagine; by host glycan is attached at N455.

The protein belongs to the asfivirus B475L family.

Its subcellular location is the host membrane. This is an uncharacterized protein from African swine fever virus (isolate Pig/Kenya/KEN-50/1950) (ASFV).